We begin with the raw amino-acid sequence, 378 residues long: MKILVDENMPYARELFSRLGEVKAVPGRPIPVEELNHADALMVRSVTKVNESLLSGTPINFVGTATAGTDHVDEAWLKQAGIGFSAAPGCNAIAVVEYVFSALLMLAERDGFSLRDRTIGIVGVGNVGSRLQTRLEALGIRTLLCDPPRAARGDEGDFRTLDELVQEADVLTFHTPLYKDGPYKTLHLADETLIRRLKPGVILINACRGPVVDNAALLARLNAGQPLSVVLDVWEGEPDLNVALLEAVDIGTSHIAGYTLEGKARGTTQVFEAYSAFIGREQRVALETLLPAPEFDRITLHGPLDQPTLKRLAHLVYDVRRDDAPLRKVAGIPGEFDKLRKNYLERREWSSLYVMCDDETAAALLCKLGFNAVHHPAH.

Residues S45 and T66 each coordinate substrate. 2 residues coordinate NAD(+): D146 and T175. Residue R208 is part of the active site. D232 contacts NAD(+). The active site involves E237. Residue H254 is the Proton donor of the active site. Position 257 (G257) interacts with NAD(+). Y258 serves as a coordination point for substrate.

Belongs to the D-isomer specific 2-hydroxyacid dehydrogenase family. PdxB subfamily. Homodimer.

The protein localises to the cytoplasm. It carries out the reaction 4-phospho-D-erythronate + NAD(+) = (R)-3-hydroxy-2-oxo-4-phosphooxybutanoate + NADH + H(+). It functions in the pathway cofactor biosynthesis; pyridoxine 5'-phosphate biosynthesis; pyridoxine 5'-phosphate from D-erythrose 4-phosphate: step 2/5. Its function is as follows. Catalyzes the oxidation of erythronate-4-phosphate to 3-hydroxy-2-oxo-4-phosphonooxybutanoate. In Salmonella paratyphi A (strain ATCC 9150 / SARB42), this protein is Erythronate-4-phosphate dehydrogenase.